Reading from the N-terminus, the 98-residue chain is Large ribosomal subunit protein mL53 (98 aa).

This sequence belongs to the mitochondrion-specific ribosomal protein mL53 family. As to quaternary structure, component of the mitochondrial large ribosomal subunit (mt-LSU). Mature yeast 74S mitochondrial ribosomes consist of a small (37S) and a large (54S) subunit. The 37S small subunit contains a 15S ribosomal RNA (15S mt-rRNA) and 34 different proteins. The 54S large subunit contains a 21S rRNA (21S mt-rRNA) and 46 different proteins.

It is found in the mitochondrion. Component of the mitochondrial ribosome (mitoribosome), a dedicated translation machinery responsible for the synthesis of mitochondrial genome-encoded proteins, including at least some of the essential transmembrane subunits of the mitochondrial respiratory chain. The mitoribosomes are attached to the mitochondrial inner membrane and translation products are cotranslationally integrated into the membrane. This is Large ribosomal subunit protein mL53 (MRPL44) from Saccharomyces cerevisiae (strain ATCC 204508 / S288c) (Baker's yeast).